A 124-amino-acid chain; its full sequence is Nucleoid-associated protein Noca_0318 (124 aa).

The protein belongs to the YbaB/EbfC family. Homodimer.

The protein localises to the cytoplasm. It localises to the nucleoid. In terms of biological role, binds to DNA and alters its conformation. May be involved in regulation of gene expression, nucleoid organization and DNA protection. The sequence is that of Nucleoid-associated protein Noca_0318 from Nocardioides sp. (strain ATCC BAA-499 / JS614).